Reading from the N-terminus, the 138-residue chain is Small ribosomal subunit protein uS8 (138 aa).

This sequence belongs to the universal ribosomal protein uS8 family. Part of the 30S ribosomal subunit. Contacts proteins S5 and S12.

Functionally, one of the primary rRNA binding proteins, it binds directly to 16S rRNA central domain where it helps coordinate assembly of the platform of the 30S subunit. This Thermus aquaticus protein is Small ribosomal subunit protein uS8.